The sequence spans 259 residues: Phosphatidylglycerol--prolipoprotein diacylglyceryl transferase (259 aa).

4 helical membrane-spanning segments follow: residues 12 to 32, 46 to 66, 83 to 103, and 109 to 129; these read LSLH…VYLA, IIDF…IYYV, IWNG…VLFV, and VLNP…AQAI. Arginine 131 is a binding site for a 1,2-diacyl-sn-glycero-3-phospho-(1'-sn-glycerol). The next 3 membrane-spanning stretches (helical) occupy residues 167–187, 194–214, and 226–246; these read VPTF…IMVW, LLDG…RLVI, and GIRV…VFIF.

It belongs to the Lgt family.

It localises to the cell membrane. It carries out the reaction L-cysteinyl-[prolipoprotein] + a 1,2-diacyl-sn-glycero-3-phospho-(1'-sn-glycerol) = an S-1,2-diacyl-sn-glyceryl-L-cysteinyl-[prolipoprotein] + sn-glycerol 1-phosphate + H(+). Its pathway is protein modification; lipoprotein biosynthesis (diacylglyceryl transfer). Its function is as follows. Catalyzes the transfer of the diacylglyceryl group from phosphatidylglycerol to the sulfhydryl group of the N-terminal cysteine of a prolipoprotein, the first step in the formation of mature lipoproteins. The chain is Phosphatidylglycerol--prolipoprotein diacylglyceryl transferase from Streptococcus equi subsp. zooepidemicus (strain H70).